A 242-amino-acid polypeptide reads, in one-letter code: 1-(5-phosphoribosyl)-5-[(5-phosphoribosylamino)methylideneamino] imidazole-4-carboxamide isomerase (242 aa).

The active-site Proton acceptor is aspartate 10.

It belongs to the HisA/HisF family.

The protein localises to the cytoplasm. The enzyme catalyses 1-(5-phospho-beta-D-ribosyl)-5-[(5-phospho-beta-D-ribosylamino)methylideneamino]imidazole-4-carboxamide = 5-[(5-phospho-1-deoxy-D-ribulos-1-ylimino)methylamino]-1-(5-phospho-beta-D-ribosyl)imidazole-4-carboxamide. The protein operates within amino-acid biosynthesis; L-histidine biosynthesis; L-histidine from 5-phospho-alpha-D-ribose 1-diphosphate: step 4/9. The polypeptide is 1-(5-phosphoribosyl)-5-[(5-phosphoribosylamino)methylideneamino] imidazole-4-carboxamide isomerase (Corynebacterium diphtheriae (strain ATCC 700971 / NCTC 13129 / Biotype gravis)).